The sequence spans 859 residues: DNA mismatch repair protein MutS (859 aa).

618 to 625 (GPNMGGKS) is a binding site for ATP.

It belongs to the DNA mismatch repair MutS family.

Its function is as follows. This protein is involved in the repair of mismatches in DNA. It is possible that it carries out the mismatch recognition step. This protein has a weak ATPase activity. In Shewanella halifaxensis (strain HAW-EB4), this protein is DNA mismatch repair protein MutS.